We begin with the raw amino-acid sequence, 305 residues long: uncharacterized protein (305 aa).

A disordered region spans residues 255–305; the sequence is RCHRAGLRSPPRTREPLWSLGPSGGEAAGEAPGGKGPPTPVLPHARRAGAA. Residues 276–288 are compositionally biased toward gly residues; the sequence is PSGGEAAGEAPGG.

This is an uncharacterized protein from Streptomyces fradiae (Streptomyces roseoflavus).